The chain runs to 373 residues: tRNA-specific 2-thiouridylase MnmA (373 aa).

Residues 12–19 and Met38 contribute to the ATP site; that span reads GMSGGVDS. An interaction with target base in tRNA region spans residues 98–100; sequence NPD. The active-site Nucleophile is the Cys103. Cysteines 103 and 200 form a disulfide. Residue Gly127 coordinates ATP. The tract at residues 150-152 is interaction with tRNA; that stretch reads KDQ. The Cysteine persulfide intermediate role is filled by Cys200. The segment at 312-313 is interaction with tRNA; it reads RY.

Belongs to the MnmA/TRMU family.

Its subcellular location is the cytoplasm. The enzyme catalyses S-sulfanyl-L-cysteinyl-[protein] + uridine(34) in tRNA + AH2 + ATP = 2-thiouridine(34) in tRNA + L-cysteinyl-[protein] + A + AMP + diphosphate + H(+). Catalyzes the 2-thiolation of uridine at the wobble position (U34) of tRNA, leading to the formation of s(2)U34. The chain is tRNA-specific 2-thiouridylase MnmA from Streptococcus pyogenes serotype M2 (strain MGAS10270).